Here is a 222-residue protein sequence, read N- to C-terminus: Cytidylate kinase (222 aa).

12–20 is a binding site for ATP; it reads GPSGAGKGT.

It belongs to the cytidylate kinase family. Type 1 subfamily.

The protein localises to the cytoplasm. The catalysed reaction is CMP + ATP = CDP + ADP. The enzyme catalyses dCMP + ATP = dCDP + ADP. This is Cytidylate kinase from Methylococcus capsulatus (strain ATCC 33009 / NCIMB 11132 / Bath).